We begin with the raw amino-acid sequence, 980 residues long: LRR receptor-like serine/threonine-protein kinase SIK1 (980 aa).

The N-terminal stretch at 1–24 (MAAARAPWLWWWVVVVVGVAVAEA) is a signal peptide. Topologically, residues 25-588 (ASGGGGGGDG…HGQRVNISKT (564 aa)) are extracellular. Residues Asn-72 and Asn-81 are each glycosylated (N-linked (GlcNAc...) asparagine). LRR repeat units follow at residues 75–98 (FAVL…IGEL), 99–122 (KNLQ…IGDC), 124–146 (SLKY…ISKL), 147–170 (KQLE…LSQI), 171–194 (PNLK…IYWN), 196–218 (VLQY…MCQL), 219–242 (TGLW…IGNC), 243–265 (TSFE…NIGF), 266–289 (LQVA…IGLM), 290–312 (QALA…ILGN), 314–337 (SYTG…LGNM), 338–361 (SKLS…LGKL), 362–385 (EELF…ISSC), 387–408 (ALNK…GFQK), 409–433 (LESL…LGHI), 435–457 (NLDT…IGDL), 458–480 (EHLL…EFGN), 481–505 (LRSV…LGQL), 507–529 (NLDS…LANC), and 531–554 (SLNN…NFSK). Asn-230 and Asn-241 each carry an N-linked (GlcNAc...) asparagine glycan. 2 N-linked (GlcNAc...) asparagine glycosylation sites follow: Asn-312 and Asn-336. N-linked (GlcNAc...) asparagine glycans are attached at residues Asn-381, Asn-399, and Asn-416. Residues Asn-464 and Asn-493 are each glycosylated (N-linked (GlcNAc...) asparagine). Residues Asn-536, Asn-541, Asn-551, and Asn-584 are each glycosylated (N-linked (GlcNAc...) asparagine). The chain crosses the membrane as a helical span at residues 589 to 609 (AIACIILGFIILLCVLLLAIY). Topologically, residues 610 to 980 (KTNQPQPLVK…FGEVISKHTM (371 aa)) are cytoplasmic. Residues 653–923 (LSEKYIIGYG…EVARVLLSLL (271 aa)) form the Protein kinase domain. ATP is bound by residues 659–667 (IGYGASSTV) and Lys-681. The Proton acceptor role is filled by Asp-778.

The protein belongs to the protein kinase superfamily. Ser/Thr protein kinase family. Autophosphorylated. In terms of tissue distribution, expressed in nodes, vascular bundles of stems, and anthers.

Its subcellular location is the cell membrane. The catalysed reaction is L-seryl-[protein] + ATP = O-phospho-L-seryl-[protein] + ADP + H(+). It carries out the reaction L-threonyl-[protein] + ATP = O-phospho-L-threonyl-[protein] + ADP + H(+). Receptor kinase involved in salt drought stress responses. Acts as a positive regulator of salt and drought tolerance. May promote salt and drought tolerance through the induction of the activities of antioxidative enzymes, such as peroxidase, superoxide dismutase and catalase. May be involved in the control of stomatal development in leaf epidermis. Possesses kinase activity in vitro. Does not seem to be involved in heat tolerance. This Oryza sativa subsp. japonica (Rice) protein is LRR receptor-like serine/threonine-protein kinase SIK1.